The primary structure comprises 953 residues: E3 ubiquitin-protein ligase ZNF598 (953 aa).

Residues 25–39 (KPSKSTRIKPTKPHH) are compositionally biased toward basic residues. The interval 25–47 (KPSKSTRIKPTKPHHTPSNSMES) is disordered. The RING-type zinc finger occupies 57-97 (CVLCCQDIDLFAVGKCDHPVCYRCSTKMRVLCEQKYCAVCR). The C2H2-type zinc finger occupies 215–238 (PLCKFCDDRYLDNDELLKHLRRDH). Disordered regions lie at residues 299 to 779 (SKNR…EDSS) and 884 to 911 (EKQQ…SSLD). Low complexity predominate over residues 371–380 (AAAMRASMAS). Positions 381–409 (HQEERSHAQERSMLKPRREEKLEPDETRN) are enriched in basic and acidic residues. 2 stretches are compositionally biased toward polar residues: residues 410 to 431 (NRST…NGSL) and 467 to 483 (LSGS…YTNQ). At Ser-489 the chain carries Phosphoserine. 2 stretches are compositionally biased toward low complexity: residues 508-518 (QSSAASAWSQA) and 536-553 (MTPM…PLPS). Composition is skewed to polar residues over residues 555–564 (SVPQPLTASS) and 641–650 (LGSPSHTPET). Over residues 655–666 (AHKENVPEKKPP) the composition is skewed to basic and acidic residues. Over residues 695–711 (SCTSFPENITSSKQPVT) the composition is skewed to polar residues. Positions 747–765 (LPPPPPPGLGPAVSKPPPG) are enriched in pro residues. Residues 770–779 (PLNSNVEDSS) are compositionally biased toward polar residues.

This sequence belongs to the ZNF598/HEL2 family.

It is found in the cytoplasm. Its subcellular location is the cytosol. It catalyses the reaction S-ubiquitinyl-[E2 ubiquitin-conjugating enzyme]-L-cysteine + [acceptor protein]-L-lysine = [E2 ubiquitin-conjugating enzyme]-L-cysteine + N(6)-ubiquitinyl-[acceptor protein]-L-lysine.. It participates in protein modification; protein ubiquitination. Its function is as follows. E3 ubiquitin-protein ligase that plays a key role in the ribosome quality control (RQC), a pathway that takes place when a ribosome has stalled during translation, leading to degradation of nascent peptide chains. ZNF598 is activated when ribosomes are stalled within an mRNA following translation of prematurely polyadenylated mRNAs. Acts as a ribosome collision sensor: specifically recognizes and binds collided di-ribosome, which arises when a trailing ribosome encounters a slower leading ribosome, leading to terminally arrest translation. Following binding to colliding ribosomes, mediates monoubiquitination of 40S ribosomal proteins RPS10/eS10 and RPS3/uS3, and 'Lys-63'-linked polyubiquitination of RPS20/uS10. Polyubiquitination of RPS20/uS10 promotes recruitment of the RQT (ribosome quality control trigger) complex, which drives the disassembly of stalled ribosomes, followed by degradation of nascent peptides. The chain is E3 ubiquitin-protein ligase ZNF598 from Danio rerio (Zebrafish).